A 605-amino-acid polypeptide reads, in one-letter code: Elongation factor 4 (605 aa).

The tr-type G domain maps to 4–186 (SATRNFCIIA…AIVARVPAPK (183 aa)). GTP is bound by residues 16 to 21 (DHGKST) and 133 to 136 (NKID).

It belongs to the TRAFAC class translation factor GTPase superfamily. Classic translation factor GTPase family. LepA subfamily.

It localises to the cell membrane. It catalyses the reaction GTP + H2O = GDP + phosphate + H(+). In terms of biological role, required for accurate and efficient protein synthesis under certain stress conditions. May act as a fidelity factor of the translation reaction, by catalyzing a one-codon backward translocation of tRNAs on improperly translocated ribosomes. Back-translocation proceeds from a post-translocation (POST) complex to a pre-translocation (PRE) complex, thus giving elongation factor G a second chance to translocate the tRNAs correctly. Binds to ribosomes in a GTP-dependent manner. The protein is Elongation factor 4 of Dehalococcoides mccartyi (strain ATCC BAA-2266 / KCTC 15142 / 195) (Dehalococcoides ethenogenes (strain 195)).